Here is a 61-residue protein sequence, read N- to C-terminus: Photosystem II reaction center protein K (61 aa).

A propeptide spanning residues 1–24 (MLNIFSLISICLNSALYSSSFFFG) is cleaved from the precursor. Residues 40-60 (MPVIPVFFFLLAFVWQAAVSF) form a helical membrane-spanning segment.

It belongs to the PsbK family. PSII is composed of 1 copy each of membrane proteins PsbA, PsbB, PsbC, PsbD, PsbE, PsbF, PsbH, PsbI, PsbJ, PsbK, PsbL, PsbM, PsbT, PsbX, PsbY, PsbZ, Psb30/Ycf12, at least 3 peripheral proteins of the oxygen-evolving complex and a large number of cofactors. It forms dimeric complexes.

It localises to the plastid. The protein localises to the chloroplast thylakoid membrane. In terms of biological role, one of the components of the core complex of photosystem II (PSII). PSII is a light-driven water:plastoquinone oxidoreductase that uses light energy to abstract electrons from H(2)O, generating O(2) and a proton gradient subsequently used for ATP formation. It consists of a core antenna complex that captures photons, and an electron transfer chain that converts photonic excitation into a charge separation. The sequence is that of Photosystem II reaction center protein K from Jasminum nudiflorum (Winter jasmine).